A 170-amino-acid polypeptide reads, in one-letter code: Acetyl-CoA decarbonylase/synthase complex subunit epsilon 1 (170 aa).

This sequence belongs to the CdhB family. As to quaternary structure, heterotetramer of two alpha and two epsilon subunits. The ACDS complex is made up of alpha, epsilon, beta, gamma and delta subunits with a probable stoichiometry of (alpha(2)epsilon(2))(4)-beta(8)-(gamma(1)delta(1))(8).

It participates in one-carbon metabolism; methanogenesis from acetate. Part of a complex that catalyzes the reversible cleavage of acetyl-CoA, allowing growth on acetate as sole source of carbon and energy. The alpha-epsilon subcomponent functions as a carbon monoxide dehydrogenase. The precise role of the epsilon subunit is unclear; it may have a stabilizing role within the alpha(2)epsilon(2) component and/or be involved in electron transfer to FAD during a potential FAD-mediated CO oxidation. The chain is Acetyl-CoA decarbonylase/synthase complex subunit epsilon 1 (cdhB1) from Methanosarcina acetivorans (strain ATCC 35395 / DSM 2834 / JCM 12185 / C2A).